A 178-amino-acid polypeptide reads, in one-letter code: Large ribosomal subunit protein uL6 (178 aa).

This sequence belongs to the universal ribosomal protein uL6 family. In terms of assembly, part of the 50S ribosomal subunit.

In terms of biological role, this protein binds to the 23S rRNA, and is important in its secondary structure. It is located near the subunit interface in the base of the L7/L12 stalk, and near the tRNA binding site of the peptidyltransferase center. This chain is Large ribosomal subunit protein uL6, found in Coxiella burnetii (strain CbuK_Q154) (Coxiella burnetii (strain Q154)).